The following is a 177-amino-acid chain: Large ribosomal subunit protein uL6 (177 aa).

Belongs to the universal ribosomal protein uL6 family. In terms of assembly, part of the 50S ribosomal subunit.

In terms of biological role, this protein binds to the 23S rRNA, and is important in its secondary structure. It is located near the subunit interface in the base of the L7/L12 stalk, and near the tRNA binding site of the peptidyltransferase center. This Acinetobacter baylyi (strain ATCC 33305 / BD413 / ADP1) protein is Large ribosomal subunit protein uL6.